A 20-amino-acid polypeptide reads, in one-letter code: Flagellar filament 33 kDa core protein (20 aa).

It belongs to the bacterial flagellin family. In terms of assembly, the flagellum consists of an outer layer composed of repeating units of FlaA around a core that contains one or all of five antigenically related polypeptides.

Its subcellular location is the periplasmic flagellum. It localises to the periplasm. Functionally, component of the core of the flagella. The polypeptide is Flagellar filament 33 kDa core protein (Spirochaeta aurantia).